Consider the following 893-residue polypeptide: Exocyst complex component 4 (893 aa).

The interval 1 to 27 (MNENGATPVAAARRHRPLPAERATSNS) is disordered.

The protein belongs to the SEC8 family. In terms of assembly, the exocyst complex is composed of sec-3/exoc1, sec-5/exoc2, sec-6/exoc3, sec-8/exoc4, sec-10/exoc5, sec-15/exoc6, exo-70/exoc7 and exo-84/exoc8. In terms of tissue distribution, pseudocoelom.

Its function is as follows. Component of the exocyst complex involved in the docking of exocytic vesicles with fusion sites on the plasma membrane. In Caenorhabditis elegans, this protein is Exocyst complex component 4 (sec-8).